We begin with the raw amino-acid sequence, 252 residues long: 5-oxoprolinase subunit A (252 aa).

Belongs to the LamB/PxpA family. As to quaternary structure, forms a complex composed of PxpA, PxpB and PxpC.

The enzyme catalyses 5-oxo-L-proline + ATP + 2 H2O = L-glutamate + ADP + phosphate + H(+). Catalyzes the cleavage of 5-oxoproline to form L-glutamate coupled to the hydrolysis of ATP to ADP and inorganic phosphate. This chain is 5-oxoprolinase subunit A, found in Corynebacterium glutamicum (strain R).